The following is a 767-amino-acid chain: Photosystem I P700 chlorophyll a apoprotein A1 (767 aa).

The segment at 1-22 is disordered; sequence MTISPPESGEKDKKILESPVKA. The segment covering 8 to 22 has biased composition (basic and acidic residues); sequence SGEKDKKILESPVKA. 8 helical membrane-spanning segments follow: residues 76 to 99, 162 to 185, 201 to 225, 309 to 327, 368 to 391, 407 to 433, 455 to 477, and 558 to 576; these read IFSAHFGHLAVIFIWMSAAFFHGA, LMALAIGAVVMAALMLHAGIFHYH, LNHHIAGLVGLGSLAWAGHCIHIGA, VSHHHLAFGVIAIIGGHMY, RHAQLSVNLAMLGSLSILISHHMY, LGLFTHHMWIGGLFIVGAGAHAGIAMV, ALISHLNWVCMWLGFHSFGLYIH, and LMIHHIHAFQIHVTVLILL. [4Fe-4S] cluster contacts are provided by Cys600 and Cys609. The next 2 helical transmembrane spans lie at 616-637 and 681-703; these read HVFLGLFWMYNCLSIVIFHFSW and ISMYGLMFLGAHFIWAFSLMFLF. His692 is a binding site for divinylchlorophyll a'. Divinyl chlorophyll a-binding residues include Met700 and Tyr708. Phylloquinone is bound at residue Trp709. A helical transmembrane segment spans residues 741–761; it reads AVGVTHFLVGGIATTWAFFHA.

Belongs to the PsaA/PsaB family. In terms of assembly, the PsaA/B heterodimer binds the P700 divinyl chlorophyll special pair and subsequent electron acceptors. PSI consists of a core antenna complex that captures photons, and an electron transfer chain that converts photonic excitation into a charge separation. The cyanobacterial PSI reaction center is composed of one copy each of PsaA,B,C,D,E,F,I,J,K,L,M and X, and forms trimeric complexes. Requires PSI electron transfer chain: 5 divinyl chlorophyll a, 1 divinyl chlorophyll a', 2 phylloquinones and 3 4Fe-4S clusters. PSI core antenna: 90 divinyl chlorophyll a, 22 carotenoids, 3 phospholipids and 1 galactolipid. P700 is a divinyl chlorophyll a/divinyl chlorophyll a' dimer, A0 is one or more divinyl chlorophyll a, A1 is one or both phylloquinones and FX is a shared 4Fe-4S iron-sulfur center. as cofactor.

It localises to the cellular thylakoid membrane. It catalyses the reaction reduced [plastocyanin] + hnu + oxidized [2Fe-2S]-[ferredoxin] = oxidized [plastocyanin] + reduced [2Fe-2S]-[ferredoxin]. PsaA and PsaB bind P700, the primary electron donor of photosystem I (PSI), as well as the electron acceptors A0, A1 and FX. PSI is a plastocyanin/cytochrome c6-ferredoxin oxidoreductase, converting photonic excitation into a charge separation, which transfers an electron from the donor P700 chlorophyll pair to the spectroscopically characterized acceptors A0, A1, FX, FA and FB in turn. Oxidized P700 is reduced on the lumenal side of the thylakoid membrane by plastocyanin or cytochrome c6. The protein is Photosystem I P700 chlorophyll a apoprotein A1 of Prochlorococcus marinus subsp. pastoris (strain CCMP1986 / NIES-2087 / MED4).